A 77-amino-acid chain; its full sequence is Large ribosomal subunit protein bL28 (77 aa).

The protein belongs to the bacterial ribosomal protein bL28 family.

The chain is Large ribosomal subunit protein bL28 from Laribacter hongkongensis (strain HLHK9).